The primary structure comprises 138 residues: Putative nickel-responsive regulator (138 aa).

Positions 78, 89, 91, and 97 each coordinate Ni(2+).

It belongs to the transcriptional regulatory CopG/NikR family. The cofactor is Ni(2+).

In terms of biological role, transcriptional regulator. The chain is Putative nickel-responsive regulator from Pyrococcus abyssi (strain GE5 / Orsay).